The chain runs to 149 residues: Macrodomain Ter protein (149 aa).

This sequence belongs to the MatP family. In terms of assembly, homodimer.

Its subcellular location is the cytoplasm. In terms of biological role, required for spatial organization of the terminus region of the chromosome (Ter macrodomain) during the cell cycle. Prevents early segregation of duplicated Ter macrodomains during cell division. Binds specifically to matS, which is a 13 bp signature motif repeated within the Ter macrodomain. This chain is Macrodomain Ter protein, found in Vibrio parahaemolyticus serotype O3:K6 (strain RIMD 2210633).